A 471-amino-acid chain; its full sequence is Fructokinase-like 1, chloroplastic (471 aa).

A chloroplast-targeting transit peptide spans 1 to 38 (MASLLIFPHLHHFDSSLDRREVLVVRHSQASRRFLTPK). The interval 36–85 (TPKASINGSGITNGAAAETTSKPSRKGRKKKQTSTVIEKDNTETDPELNP) is disordered. Polar residues predominate over residues 39 to 57 (ASINGSGITNGAAAETTSK). The segment covering 58 to 67 (PSRKGRKKKQ) has biased composition (basic residues).

The protein belongs to the carbohydrate kinase PfkB family. As to quaternary structure, interacts with CITRX/TRXz. Interacts with PTAC7. Self-interacts. Binds to FLN2. Associates with the plastid-encoded RNA polymerase (PEP) complex.

It localises to the plastid. It is found in the chloroplast. Functionally, required for proper chloroplast development, most likely through regulating plastid-encoded polymerase (PEP) dependent chloroplast transcription. Acts as a component of the transcriptionally active plastid chromosome that is required for plastid gene expression. This Arabidopsis thaliana (Mouse-ear cress) protein is Fructokinase-like 1, chloroplastic.